Reading from the N-terminus, the 305-residue chain is Secreted mono- and diacylglycerol lipase A (305 aa).

The N-terminal stretch at 1–26 (MRLSFFTALSAVASLGYALPGKLQSR) is a signal peptide. 2 cysteine pairs are disulfide-bonded: Cys62/Cys67 and Cys129/Cys132. Ser171 functions as the Nucleophile in the catalytic mechanism. The Charge relay system role is filled by Asp225. An N-linked (GlcNAc...) asparagine glycan is attached at Asn251. His285 (charge relay system) is an active-site residue. Positions 303–305 (KRV) are cleaved as a propeptide — removed in mature form.

This sequence belongs to the AB hydrolase superfamily. Lipase family. Class 3 subfamily. Post-translationally, multiple forms of this lipase are due to the presence of different carbohydrates, which may contribute to the stability of this lipase but not to the enzyme activity.

It localises to the secreted. It carries out the reaction a monoacylglycerol + H2O = glycerol + a fatty acid + H(+). The enzyme catalyses a diacylglycerol + H2O = a monoacylglycerol + a fatty acid + H(+). Both Fe(3+) and Hg(2+) inhibit the activity significantly. Functionally, secreted lipase strictly specific to mono- and diacylglycerol, but not triacylglycerol. Hydrolyzes long-chain monoacylglycerols most efficiently with the highest activities observed on 1- and 3- monopalmitoyl-sn-glycerol or 1-monostearoyl-rac-glycerol. Prefers to attack alpha positions to beta positions of monoacylglycerol, but shows no stereospecificity on mono- and diacylglycerol. This chain is Secreted mono- and diacylglycerol lipase A, found in Penicillium camembertii.